We begin with the raw amino-acid sequence, 611 residues long: Virulence metalloprotease (611 aa).

A signal peptide spans Met-1–Ala-25. The propeptide occupies Ala-26–His-199. A Zn(2+)-binding site is contributed by His-346. The active site involves Glu-347. The Zn(2+) site is built by His-350 and Glu-370. The active-site Proton donor is His-429.

Belongs to the peptidase M4 family. The cofactor is Ca(2+). Requires Zn(2+) as cofactor. In terms of processing, seems to be more extensively processed.

Its subcellular location is the secreted. Its function is as follows. Extracellular zinc metalloprotease involved in the virulence mechanism of V.anguillarum. The sequence is that of Virulence metalloprotease (empA) from Vibrio anguillarum (Listonella anguillarum).